The primary structure comprises 159 residues: Protein Smg homolog (159 aa).

Belongs to the Smg family.

This chain is Protein Smg homolog, found in Shewanella amazonensis (strain ATCC BAA-1098 / SB2B).